The chain runs to 894 residues: B-cell lymphoma/leukemia 11B (894 aa).

Serine 97 and serine 110 each carry phosphoserine. Position 120 is a phosphothreonine (threonine 120). At serine 129 the chain carries Phosphoserine. Lysine 137 participates in a covalent cross-link: Glycyl lysine isopeptide (Lys-Gly) (interchain with G-Cter in SUMO2). The segment at 221–251 (YICTTCKQPFNSAWFLLQHAQNTHGFRIYLE) adopts a C2H2-type 1 zinc-finger fold. Position 256 is a phosphoserine (serine 256). Phosphothreonine is present on threonine 260. Serine 277 bears the Phosphoserine mark. At arginine 293 the chain carries Omega-N-methylarginine. An Asymmetric dimethylarginine modification is found at arginine 322. Serine 358 carries the post-translational modification Phosphoserine. Disordered stretches follow at residues 370–428 (LAGN…KSKS) and 471–583 (KRHM…GGGA). Position 376 is a phosphothreonine (threonine 376). A phosphoserine mark is found at serine 381, serine 398, and serine 401. Pro residues predominate over residues 396–423 (QPSPKSPFLSTPPLPPMPPGGTPPPQPP). A phosphothreonine mark is found at threonine 406 and threonine 417. 2 C2H2-type zinc fingers span residues 427 to 454 (KSCE…GEKP) and 455 to 482 (YKCQ…HKAG). The span at 471–480 (KRHMKTHMHK) shows a compositional bias: basic residues. A phosphoserine mark is found at serine 483, serine 488, serine 496, and serine 497. The span at 511–529 (KAADGDFRHHESDPSLGHE) shows a compositional bias: basic and acidic residues. Positions 530–546 (PEEEDEEEEEEEEELLL) are enriched in acidic residues. The span at 568 to 583 (NGGGGVPGVPGAGGGA) shows a compositional bias: gly residues. Glycyl lysine isopeptide (Lys-Gly) (interchain with G-Cter in SUMO2) cross-links involve residues lysine 591 and lysine 617. A disordered region spans residues 653 to 680 (GRGGGFAPGTEPFPGLFPRKPAPLPSPG). At serine 678 the chain carries Phosphoserine. Residues lysine 686 and lysine 723 each participate in a glycyl lysine isopeptide (Lys-Gly) (interchain with G-Cter in SUMO2) cross-link. Positions 737–752 (FATSSEHSSENGSLRF) are enriched in polar residues. A disordered region spans residues 737–794 (FATSSEHSSENGSLRFSTPPGDLLDGGLSGRSGTASGGSTPHLGGPGPGRPSSKEGRR). Over residues 753 to 775 (STPPGDLLDGGLSGRSGTASGGS) the composition is skewed to low complexity. A Phosphothreonine modification is found at threonine 754. Residues serine 765 and serine 772 each carry the phosphoserine modification. C2H2-type zinc fingers lie at residues 796–823 (DTCE…GERP), 824–853 (YKCE…GKEV), and 854–884 (YRCD…LLTN). The residue at position 851 (lysine 851) is an N6-acetyllysine. Residue lysine 887 forms a Glycyl lysine isopeptide (Lys-Gly) (interchain with G-Cter in SUMO2) linkage.

In terms of assembly, interacts with TFCOUP1, SIRT1, ARP1 and EAR2. Interacts with EP300; the interaction is detected in activated T-lymphocytes, but not under resting conditions. Sumoylated with SUMO1. Highly expressed in brain and in malignant T-cell lines derived from patients with adult T-cell leukemia/lymphoma.

It localises to the nucleus. Its function is as follows. Key regulator of both differentiation and survival of T-lymphocytes during thymocyte development in mammals. Essential in controlling the responsiveness of hematopoietic stem cells to chemotactic signals by modulating the expression of the receptors CCR7 and CCR9, which direct the movement of progenitor cells from the bone marrow to the thymus. Is a regulator of IL2 promoter and enhances IL2 expression in activated CD4(+) T-lymphocytes. Tumor-suppressor that represses transcription through direct, TFCOUP2-independent binding to a GC-rich response element. May also function in the P53-signaling pathway. This chain is B-cell lymphoma/leukemia 11B (BCL11B), found in Homo sapiens (Human).